Reading from the N-terminus, the 447-residue chain is MITLKEALNKSENELKEIKTLLRQRVKENIELNAYIGEINESGSGVPILIKDNINVKGWEITCASKILKGYVSPYNASVITKLHENKMCAFGRANMDEFAMGSTTESSCYGRVKNPLDTSRVPGGSSGGSAAAVAAGLAIASLGSDTGGSIRQPAGFCGCVGLKPSYGRVSRYGLIAYSSSLDQIGPITQNVEDAALLLDAISGYDKQDSTSANLPSLNTFKDLDPNARYKVAILKDFLKDATPQIQEAYNHTIKILESMGHTIVEKSMLDTRYHISAYYIICTAEASSNLARFDGIRYGTRSESKNLKDVYLNTRSAYFGEEVKRRILLGSFVLSSGYYDAYYLKAQQVRKKICADYESIFNECDSILLPIAPSVAPKFGSTHSSLEMYLSDIYTIGVNLAGLPALCMPVSKDKNGLSIGMQFIGAKFKEQNILNIAYGLEKEINN.

Active-site charge relay system residues include Lys51 and Ser126. The Acyl-ester intermediate role is filled by Ser150.

It belongs to the amidase family. GatA subfamily. In terms of assembly, heterotrimer of A, B and C subunits.

It catalyses the reaction L-glutamyl-tRNA(Gln) + L-glutamine + ATP + H2O = L-glutaminyl-tRNA(Gln) + L-glutamate + ADP + phosphate + H(+). Allows the formation of correctly charged Gln-tRNA(Gln) through the transamidation of misacylated Glu-tRNA(Gln) in organisms which lack glutaminyl-tRNA synthetase. The reaction takes place in the presence of glutamine and ATP through an activated gamma-phospho-Glu-tRNA(Gln). The protein is Glutamyl-tRNA(Gln) amidotransferase subunit A of Helicobacter hepaticus (strain ATCC 51449 / 3B1).